The following is a 370-amino-acid chain: NSFL1 cofactor p47 (370 aa).

Residues 54-73 (SQATPSSVSRGTAPSDNRVT) show a composition bias toward polar residues. The segment at 54-116 (SQATPSSVSR…VGPPRKKSPN (63 aa)) is disordered. Phosphoserine is present on residues Ser74, Ser102, Ser114, and Ser140. The Nuclear localization signal motif lies at 109 to 115 (PPRKKSP). Tyr167 bears the Phosphotyrosine mark. The Nuclear localization signal signature appears at 172–175 (KRQH). 3 positions are modified to phosphoserine: Ser176, Ser192, and Ser272. Residues 179 to 244 (DVHVVLKLWK…MEDHRDEDFV (66 aa)) enclose the SEP domain. The segment covering 261–287 (GSTAPQVLSTSSPAQQAENEAKASSSI) has biased composition (polar residues). A disordered region spans residues 261–289 (GSTAPQVLSTSSPAQQAENEAKASSSILI). Residues 291-368 (ESEPTTNIQI…NLLNAVIVQR (78 aa)) form the UBX domain.

Belongs to the NSFL1C family. In terms of assembly, part of a ternary complex containing STX5A, NSFL1C and VCP. NSFL1C forms a homotrimer that binds to one end of a VCP homohexamer. The complex binds to membranes enriched in phosphatidylethanolamine-containing lipids and promotes Golgi membrane fusion. Interaction with VCIP135 leads to dissociation of the complex via ATP hydrolysis by VCP. Binds ubiquitin and mono-ubiquitinated proteins via its N-terminal UBA-like domain when bound to VCP. Post-translationally, phosphorylated during mitosis. Phosphorylation inhibits interaction with Golgi membranes and is required for the fragmentation of the Golgi stacks during mitosis.

The protein resides in the nucleus. It is found in the golgi apparatus. It localises to the golgi stack. The protein localises to the chromosome. Its subcellular location is the cytoplasm. The protein resides in the cytoskeleton. It is found in the microtubule organizing center. It localises to the centrosome. Functionally, reduces the ATPase activity of VCP. Necessary for the fragmentation of Golgi stacks during mitosis and for VCP-mediated reassembly of Golgi stacks after mitosis. May play a role in VCP-mediated formation of transitional endoplasmic reticulum (tER). Inhibits the activity of CTSL (in vitro). Together with UBXN2B/p37, regulates the centrosomal levels of kinase AURKA/Aurora A during mitotic progression by promoting AURKA removal from centrosomes in prophase. Also, regulates spindle orientation during mitosis. This is NSFL1 cofactor p47 (NSFL1C) from Homo sapiens (Human).